Here is a 364-residue protein sequence, read N- to C-terminus: MLLRRLEMLNFRNFARQAVEPGLYFNVLSGRNAQGKTNILESIYLACTGRSFRTAREKELIKREKEFSSIRCLFETRGREVEVKVTLVPGRKRIEVNGVLKSGHPFGWPGVVLFTPDDLVMIKGSPAERRRFLDYDLGPFHPHYAHCLDRYNRVLSQRNALLREAKEKRTTGGPLEVWDEQLCRYGSRLLFLRVSLLKKFFPAIRALHRELTEGAENIEISYLSSLKIGEECGEDEIYERFSGELRLVRDEEIARMQTLVGPHRDDLHIKVDGHDARVYCSQGQQRTIVLTLKVFLIEQWRSETGEYPILLLDDVLFELDDNRREALMCRLGGLVQTFLTCTRVNFDIEGFKAKVFTVSGGEVT.

Gly30–Thr37 contacts ATP.

The protein belongs to the RecF family.

The protein localises to the cytoplasm. Functionally, the RecF protein is involved in DNA metabolism; it is required for DNA replication and normal SOS inducibility. RecF binds preferentially to single-stranded, linear DNA. It also seems to bind ATP. This Pelotomaculum thermopropionicum (strain DSM 13744 / JCM 10971 / SI) protein is DNA replication and repair protein RecF.